The chain runs to 194 residues: Surfactant protein C (194 aa).

A disordered region spans residues 1–21 (MDMGSKEVLMESPPDYSTGPR). Positions 1–23 (MDMGSKEVLMESPPDYSTGPRSQ) are excised as a propeptide. S-palmitoyl cysteine attachment occurs at residues Cys-28 and Cys-29. The propeptide occupies 59–194 (HMSQKHTEMV…LCGELPLYYI (136 aa)). One can recognise a BRICHOS domain in the interval 95-194 (FSIGSTGIVL…LCGELPLYYI (100 aa)). Cys-122 and Cys-186 are joined by a disulfide. The segment at 149 to 170 (SSTPTSKLGQEEGHSAGSDSDS) is disordered.

The protein localises to the secreted. The protein resides in the extracellular space. It localises to the surface film. Functionally, pulmonary surfactant associated proteins promote alveolar stability by lowering the surface tension at the air-liquid interface in the peripheral air spaces. This is Surfactant protein C from Rattus norvegicus (Rat).